Reading from the N-terminus, the 416-residue chain is Basic salivary proline-rich protein 2 (416 aa).

The first 16 residues, 1–16 (MLLILLSVALLALSSA), serve as a signal peptide directing secretion. Gln17 is subject to Pyrrolidone carboxylic acid. Residues 19-28 (LNEDVSQEES) are compositionally biased toward polar residues. Positions 19–416 (LNEDVSQEES…QGGRPSRPPQ (398 aa)) are disordered. Phosphoserine is present on Ser24. The span at 34 to 47 (GNPQGAPPQGGNKP) shows a compositional bias: low complexity. Pro residues-rich tracts occupy residues 48-104 (QGPP…PPPQ) and 112-165 (RSPP…PPPQ). The residue at position 52 (Ser52) is a Phosphoserine. 15 tandem repeats follow at residues 53-72 (PPGKPQGPPPQGGNQPQGPP), 74-93 (PPGKPQGPPPQGGNKPQGPP), 94-113 (PPGKPQGPPPQGDKSRSPRS), 114-133 (PPGKPQGPPPQGGNQPQGPP), 135-154 (PPGKPQGPPPQGGNKPQGPP), 155-174 (PPGKPQGPPPQGDNKSRSSR), 176-195 (PPGKPQGPPPQGGNQPQGPP), 197-216 (PPGKPQGPPPQGGNKPQGPP), 217-236 (PPGKPQGPPPQGDNKSQSAR), 238-257 (PPGKPQGPPPQGGNQPQGPP), 259-278 (PPGKPQGPPPQGGNKPQGPP), 279-298 (PPGKPQGPPPQGGSKSRSSR), 300-319 (PPGKPQGPPPQGGNQPQGPP), 321-340 (PPGKPQGPPPQGGNKPQGPP), and 341-360 (PPGKPQGPPPQGGSKSRSAR). Residues 53–360 (PPGKPQGPPP…QGGSKSRSAR (308 aa)) are 15 X 20 AA approximate tandem repeats of P-P-G-K-P-Q-G-P-P-P-Q-G-[GD]-[NKS]-[KSQ]-[PRS]-[QRS] [GPS]-[PSAR]-[PSR]. N-linked (GlcNAc...) asparagine glycosylation occurs at Asn168. The span at 177 to 227 (PGKPQGPPPQGGNQPQGPPPPPGKPQGPPPQGGNKPQGPPPPGKPQGPPPQ) shows a compositional bias: pro residues. Asn230 carries an N-linked (GlcNAc...) asparagine glycan. Residue Ser232 is glycosylated (O-linked (Hex) serine). Residues 239–289 (PGKPQGPPPQGGNQPQGPPPPPGKPQGPPPQGGNKPQGPPPPGKPQGPPPQ) are compositionally biased toward pro residues. A glycan (N-linked (GlcNAc...) asparagine) is linked at Asn272. Residues 290–300 (GGSKSRSSRSP) are compositionally biased toward low complexity. 2 stretches are compositionally biased toward pro residues: residues 301–351 (PGKP…PPPQ) and 378–416 (QGPPPPAGGNPQQPQAPPAGQPQGPPRPPQGGRPSRPPQ).

Post-translationally, N- and O-glycosylated. In head and neck cancer patients, O-glycosylated with glucosylgalactosyl carbohydrate moiety. This modification would require prior hydroxylation on the lysine residue. Proteolytically cleaved at the tripeptide Xaa-Pro-Gln, where Xaa in the P(3) position is mostly lysine. The endoprotease may be of microbial origin. In terms of processing, pyroglutamate formation occurs on terminal Gln residues of cleaved peptides. Pyroglutamate formation found on at least Gln-398 and Gln-400.

It localises to the secreted. The sequence is that of Basic salivary proline-rich protein 2 (PRB2) from Homo sapiens (Human).